Here is a 598-residue protein sequence, read N- to C-terminus: UvrABC system protein C (598 aa).

Residues 13-92 enclose the GIY-YIG domain; sequence SSPGVYLMKD…IKKYQPRYNV (80 aa). Residues 206–241 enclose the UVR domain; sequence DTTIANLEEAIKKASQEHKFEHAAALYRTLTLIRQT.

It belongs to the UvrC family. In terms of assembly, interacts with UvrB in an incision complex.

Its subcellular location is the cytoplasm. The UvrABC repair system catalyzes the recognition and processing of DNA lesions. UvrC both incises the 5' and 3' sides of the lesion. The N-terminal half is responsible for the 3' incision and the C-terminal half is responsible for the 5' incision. In Chlamydia muridarum (strain MoPn / Nigg), this protein is UvrABC system protein C.